The chain runs to 399 residues: Ribonucleoside-diphosphate reductase small chain 1 (399 aa).

Serine 15, serine 24, and serine 41 each carry phosphoserine. Residues aspartate 145, glutamate 176, and histidine 179 each coordinate Fe cation. Tyrosine 183 is a catalytic residue. Fe cation-binding residues include glutamate 239, glutamate 273, and histidine 276.

Belongs to the ribonucleoside diphosphate reductase small chain family. Heterotetramer of two large (R1) and two small (R2) subunits. S.cerevisiae has two different R1 subunits (RNR1 and RNR3) and two different R2 subunits (RNR2 and RNR4). The functional form of the small subunits is a RNR2-RNR4 heterodimer, where RNR2 provides the iron-radical center and RNR4 is required for proper folding of RNR2 and assembly with the large subunits. Under normal growth conditions, the active form of the large subunits is a homodimer of the constitutively expressed RNR1. In damaged cells or cells arrested for DNA synthesis, the reductase consists of multiple species because of the association of the small subunits (RNR2-RNR4) with either the RNR1 homodimer or a heterodimer of RNR1 and the damage-inducible RNR3. Interacts with DIF1. Requires Fe cation as cofactor.

The protein localises to the nucleus. The catalysed reaction is a 2'-deoxyribonucleoside 5'-diphosphate + [thioredoxin]-disulfide + H2O = a ribonucleoside 5'-diphosphate + [thioredoxin]-dithiol. Provides the precursors necessary for DNA synthesis. Catalyzes the biosynthesis of deoxyribonucleotides from the corresponding ribonucleotides. RNR2 provides the diiron-tyrosyl radical center. This Saccharomyces cerevisiae (strain ATCC 204508 / S288c) (Baker's yeast) protein is Ribonucleoside-diphosphate reductase small chain 1 (RNR2).